The sequence spans 213 residues: 3,4-dihydroxy-2-butanone 4-phosphate synthase (213 aa).

D-ribulose 5-phosphate-binding positions include 37–38, Asp-42, 150–154, and Glu-174; these read RE and RPGHT. Mg(2+) is bound at residue Glu-38. His-153 serves as a coordination point for Mg(2+).

The protein belongs to the DHBP synthase family. In terms of assembly, homodimer. It depends on Mg(2+) as a cofactor. Requires Mn(2+) as cofactor.

It carries out the reaction D-ribulose 5-phosphate = (2S)-2-hydroxy-3-oxobutyl phosphate + formate + H(+). It participates in cofactor biosynthesis; riboflavin biosynthesis; 2-hydroxy-3-oxobutyl phosphate from D-ribulose 5-phosphate: step 1/1. Its function is as follows. Catalyzes the conversion of D-ribulose 5-phosphate to formate and 3,4-dihydroxy-2-butanone 4-phosphate. In Clostridium botulinum (strain ATCC 19397 / Type A), this protein is 3,4-dihydroxy-2-butanone 4-phosphate synthase.